The primary structure comprises 138 residues: MTALFLMSMLFGLTCGQAMSFCIPTEYTMHIERRECAYCLTINTTICAGYCMTRDINGKLFLPKYALSQDVCTYRDFIYRTVEIPGCPLHVAPYFSYPVALSCKCGKCNTDYSDCIHEAIKTNYCTKPQKSYLVGFSV.

Positions 1 to 20 (MTALFLMSMLFGLTCGQAMS) are cleaved as a signal peptide. Disulfide bonds link cysteine 22/cysteine 72, cysteine 36/cysteine 87, cysteine 39/cysteine 125, cysteine 47/cysteine 103, cysteine 51/cysteine 105, and cysteine 108/cysteine 115. Asparagine 43 carries N-linked (GlcNAc...) asparagine glycosylation. Residues 133–138 (LVGFSV) constitute a propeptide that is removed on maturation.

It belongs to the glycoprotein hormones subunit beta family. In terms of assembly, heterodimer of a common alpha chain and a unique beta chain which confers biological specificity to thyrotropin, lutropin, follitropin and gonadotropin.

It localises to the secreted. Indispensable for the control of thyroid structure and metabolism. This Homo sapiens (Human) protein is Thyrotropin subunit beta (TSHB).